The following is a 244-amino-acid chain: Large ribosomal subunit protein uL30B (244 aa).

A compositionally biased stretch (polar residues) spans 1 to 11 (MSTEKILTPES). The disordered stretch occupies residues 1 to 21 (MSTEKILTPESQLKKTKAQQK).

Belongs to the universal ribosomal protein uL30 family. In terms of assembly, component of the large ribosomal subunit (LSU). Mature yeast ribosomes consist of a small (40S) and a large (60S) subunit. The 40S small subunit contains 1 molecule of ribosomal RNA (18S rRNA) and 33 different proteins (encoded by 57 genes). The large 60S subunit contains 3 rRNA molecules (25S, 5.8S and 5S rRNA) and 46 different proteins (encoded by 81 genes).

Its subcellular location is the cytoplasm. In terms of biological role, component of the ribosome, a large ribonucleoprotein complex responsible for the synthesis of proteins in the cell. The small ribosomal subunit (SSU) binds messenger RNAs (mRNAs) and translates the encoded message by selecting cognate aminoacyl-transfer RNA (tRNA) molecules. The large subunit (LSU) contains the ribosomal catalytic site termed the peptidyl transferase center (PTC), which catalyzes the formation of peptide bonds, thereby polymerizing the amino acids delivered by tRNAs into a polypeptide chain. The nascent polypeptides leave the ribosome through a tunnel in the LSU and interact with protein factors that function in enzymatic processing, targeting, and the membrane insertion of nascent chains at the exit of the ribosomal tunnel. The chain is Large ribosomal subunit protein uL30B from Saccharomyces cerevisiae (strain ATCC 204508 / S288c) (Baker's yeast).